Consider the following 142-residue polypeptide: Ribosome-binding factor A (142 aa).

Positions 123–142 (VQRDLDSAPEDDEPETGTGH) are disordered. Residues 129–142 (SAPEDDEPETGTGH) are compositionally biased toward acidic residues.

This sequence belongs to the RbfA family. Monomer. Binds 30S ribosomal subunits, but not 50S ribosomal subunits or 70S ribosomes.

It is found in the cytoplasm. In terms of biological role, one of several proteins that assist in the late maturation steps of the functional core of the 30S ribosomal subunit. Associates with free 30S ribosomal subunits (but not with 30S subunits that are part of 70S ribosomes or polysomes). Required for efficient processing of 16S rRNA. May interact with the 5'-terminal helix region of 16S rRNA. The sequence is that of Ribosome-binding factor A from Methylobacterium radiotolerans (strain ATCC 27329 / DSM 1819 / JCM 2831 / NBRC 15690 / NCIMB 10815 / 0-1).